A 278-amino-acid polypeptide reads, in one-letter code: Large ribosomal subunit protein uL2 (278 aa).

2 disordered regions span residues 29–55 (PEKSLVRPLHSKGGRNNAGRITVRHQG) and 225–278 (VMNP…NKKR). Residues 258–278 (RSNKKASNKYIVRRRTKNKKR) show a composition bias toward basic residues.

The protein belongs to the universal ribosomal protein uL2 family. In terms of assembly, part of the 50S ribosomal subunit. Forms a bridge to the 30S subunit in the 70S ribosome. The N-terminus is blocked. In terms of processing, phosphorylated on serine and threonine residues.

Functionally, one of the primary rRNA binding proteins. Required for association of the 30S and 50S subunits to form the 70S ribosome, for tRNA binding and peptide bond formation. It has been suggested to have peptidyltransferase activity; this is somewhat controversial. Makes several contacts with the 16S rRNA in the 70S ribosome. This Streptomyces collinus protein is Large ribosomal subunit protein uL2.